We begin with the raw amino-acid sequence, 210 residues long: Molybdenum cofactor guanylyltransferase (210 aa).

Residues 14–16 (LAG), Lys-27, Asn-55, Asp-73, and Asp-108 each bind GTP. Asp-108 provides a ligand contact to Mg(2+).

The protein belongs to the MobA family. Monomer. Requires Mg(2+) as cofactor.

Its subcellular location is the cytoplasm. It carries out the reaction Mo-molybdopterin + GTP + H(+) = Mo-molybdopterin guanine dinucleotide + diphosphate. Its function is as follows. Transfers a GMP moiety from GTP to Mo-molybdopterin (Mo-MPT) cofactor (Moco or molybdenum cofactor) to form Mo-molybdopterin guanine dinucleotide (Mo-MGD) cofactor. This Rhodopseudomonas palustris (strain BisB5) protein is Molybdenum cofactor guanylyltransferase.